A 440-amino-acid polypeptide reads, in one-letter code: Golgi-associated RAB2 interactor protein 2 (440 aa).

Belongs to the GARIN family. Interacts with CALM1. As to expression, expressed in testis (at protein level).

It is found in the cell projection. It localises to the cilium. Its subcellular location is the flagellum. Seems to play a role in sperm motility. The sequence is that of Golgi-associated RAB2 interactor protein 2 from Mus musculus (Mouse).